The chain runs to 547 residues: Puff-specific protein Bx42 (547 aa).

An SNW region spans residues Ala177 to Asn343. Ser227 and Ser235 each carry phosphoserine. Disordered stretches follow at residues Arg333–Ile398 and Gln486–Asp547. Basic and acidic residues-rich tracts occupy residues Glu358–Ile398 and Lys526–Ser539.

Belongs to the SNW family.

It is found in the nucleus. Functionally, may play a role in chromatin structure and function. The protein is Puff-specific protein Bx42 (Bx42) of Drosophila melanogaster (Fruit fly).